The chain runs to 433 residues: Casein kinase 1-like protein 5 (433 aa).

Residues 9-278 (FRLGRKIGSG…LKRLFRNLFI (270 aa)) enclose the Protein kinase domain. ATP-binding positions include 15 to 23 (IGSGSFGEI) and Lys38. The active-site Proton acceptor is the Asp128. Residues 297–433 (QSQSGNPQPR…DDVEPQSKAL (137 aa)) are disordered. The segment covering 342–359 (LKQKDKNGNDSAIAKDKL) has biased composition (basic and acidic residues). A compositionally biased stretch (low complexity) spans 362-375 (GSLNLGRSEGSSSR). Ser390 carries the post-translational modification Phosphoserine. Over residues 407 to 423 (INNNAGDETAATPQSNG) the composition is skewed to polar residues.

This sequence belongs to the protein kinase superfamily. CK1 Ser/Thr protein kinase family. Casein kinase I subfamily. Monomer. Autophosphorylated.

It localises to the cytoplasm. The enzyme catalyses L-seryl-[protein] + ATP = O-phospho-L-seryl-[protein] + ADP + H(+). The catalysed reaction is L-threonyl-[protein] + ATP = O-phospho-L-threonyl-[protein] + ADP + H(+). In terms of biological role, casein kinases are operationally defined by their preferential utilization of acidic proteins such as caseins as substrates. It can phosphorylate a large number of proteins. The sequence is that of Casein kinase 1-like protein 5 from Arabidopsis thaliana (Mouse-ear cress).